A 190-amino-acid chain; its full sequence is Small ribosomal subunit protein eS7B (190 aa).

Position 2 is an N-acetylserine (S2). A phosphoserine mark is found at S10 and S31. Glycyl lysine isopeptide (Lys-Gly) (interchain with G-Cter in ubiquitin) cross-links involve residues K83 and K84.

This sequence belongs to the eukaryotic ribosomal protein eS7 family. In terms of assembly, component of the small ribosomal subunit (SSU). Mature yeast ribosomes consist of a small (40S) and a large (60S) subunit. The 40S small subunit contains 1 molecule of ribosomal RNA (18S rRNA) and 33 different proteins (encoded by 57 genes). The large 60S subunit contains 3 rRNA molecules (25S, 5.8S and 5S rRNA) and 46 different proteins (encoded by 81 genes). Interacts with snoRNA U3. uS11 interacts with MPP10. Component of the ribosomal small subunit (SSU) processome composed of at least 40 protein subunits and snoRNA U3. N-terminally acetylated by acetyltransferase NatA. In terms of processing, ubiquitinated at Lys-83 and Lys-84 in response to stalled ribosomes, leading to activation of the No-Go Decay (NGD) pathway: first monoubiquitinated by MOT2/NOT4, followed by formation by HEL2 of 'Lys-63'-linked polyubiquitin chains on monoubiquitin.

It is found in the cytoplasm. The protein resides in the nucleus. Its subcellular location is the nucleolus. Functionally, component of the ribosome, a large ribonucleoprotein complex responsible for the synthesis of proteins in the cell. The small ribosomal subunit (SSU) binds messenger RNAs (mRNAs) and translates the encoded message by selecting cognate aminoacyl-transfer RNA (tRNA) molecules. The large subunit (LSU) contains the ribosomal catalytic site termed the peptidyl transferase center (PTC), which catalyzes the formation of peptide bonds, thereby polymerizing the amino acids delivered by tRNAs into a polypeptide chain. The nascent polypeptides leave the ribosome through a tunnel in the LSU and interact with protein factors that function in enzymatic processing, targeting, and the membrane insertion of nascent chains at the exit of the ribosomal tunnel. eS7 is involved in nucleolar processing of pre-18S ribosomal RNA and ribosome assembly. The sequence is that of Small ribosomal subunit protein eS7B from Saccharomyces cerevisiae (strain ATCC 204508 / S288c) (Baker's yeast).